A 312-amino-acid chain; its full sequence is Ribosomal RNA small subunit methyltransferase H (312 aa).

Residues Gly-33 to Tyr-35, Asp-51, Phe-78, Asp-97, and Gln-104 each bind S-adenosyl-L-methionine.

This sequence belongs to the methyltransferase superfamily. RsmH family.

It localises to the cytoplasm. It carries out the reaction cytidine(1402) in 16S rRNA + S-adenosyl-L-methionine = N(4)-methylcytidine(1402) in 16S rRNA + S-adenosyl-L-homocysteine + H(+). Specifically methylates the N4 position of cytidine in position 1402 (C1402) of 16S rRNA. This Orientia tsutsugamushi (strain Ikeda) (Rickettsia tsutsugamushi) protein is Ribosomal RNA small subunit methyltransferase H.